A 188-amino-acid polypeptide reads, in one-letter code: Acireductone dioxygenase 1 (188 aa).

Residues His-90, His-92, Glu-96, and His-135 each contribute to the Fe(2+) site. Residues His-90, His-92, Glu-96, and His-135 each contribute to the Ni(2+) site.

The protein belongs to the acireductone dioxygenase (ARD) family. Fe(2+) is required as a cofactor. Requires Ni(2+) as cofactor.

The protein localises to the cytoplasm. It localises to the nucleus. It catalyses the reaction 1,2-dihydroxy-5-(methylsulfanyl)pent-1-en-3-one + O2 = 4-methylsulfanyl-2-oxobutanoate + formate + 2 H(+). The catalysed reaction is 1,2-dihydroxy-5-(methylsulfanyl)pent-1-en-3-one + O2 = 3-(methylsulfanyl)propanoate + CO + formate + 2 H(+). Its pathway is amino-acid biosynthesis; L-methionine biosynthesis via salvage pathway; L-methionine from S-methyl-5-thio-alpha-D-ribose 1-phosphate: step 5/6. In terms of biological role, catalyzes 2 different reactions between oxygen and the acireductone 1,2-dihydroxy-3-keto-5-methylthiopentene (DHK-MTPene) depending upon the metal bound in the active site. Fe-containing acireductone dioxygenase (Fe-ARD) produces formate and 2-keto-4-methylthiobutyrate (KMTB), the alpha-ketoacid precursor of methionine in the methionine recycle pathway. Ni-containing acireductone dioxygenase (Ni-ARD) produces methylthiopropionate, carbon monoxide and formate, and does not lie on the methionine recycle pathway. This chain is Acireductone dioxygenase 1, found in Vitis vinifera (Grape).